A 3230-amino-acid polypeptide reads, in one-letter code: Helicase SRCAP (3230 aa).

The disordered stretch occupies residues 1–71 (MQSSPSPAHP…GPPDGATVPL (71 aa)). The segment covering 26–41 (GSNPVSPASSSSPASS) has biased composition (low complexity). Residues 124–196 (LPKVPEPPRP…EQAKLRRIAS (73 aa)) enclose the HSA domain. Disordered regions lie at residues 253–547 (QPLT…EEDD) and 559–581 (EEQS…LGPK). Over residues 257–273 (SSKAGSSPCLGSSSAAS) the composition is skewed to low complexity. Residues 283–313 (DDEDGDFQPQEDEEEDDEETIEVEEQQEGND) show a composition bias toward acidic residues. Residues 315-329 (EAQRREIELLRREGE) show a composition bias toward basic and acidic residues. Low complexity predominate over residues 337-356 (RSLPPQLLEGPSSPSQTPSS). Residues 397-425 (DEDDEEFTANEEEAEDEEDTIAAEEQLEG) show a composition bias toward acidic residues. The segment covering 426 to 441 (EVDHAMELSELAREGE) has biased composition (basic and acidic residues). Acidic residues-rich tracts occupy residues 462 to 490 (SEDE…EPPQ), 503 to 517 (RSED…EEET), and 524 to 533 (EESESEESED). Residues 630–795 (VTMYEKKLNG…WSLMHFLMPH (166 aa)) form the Helicase ATP-binding domain. 643–650 (DEMGLGKT) serves as a coordination point for ATP. 3 disordered regions span residues 1017–1045 (APLG…PQVL), 1058–1125 (PPLI…PGSS), and 1138–1166 (TFPP…TPAP). 2 stretches are compositionally biased toward pro residues: residues 1018 to 1030 (PLGP…PPGP) and 1058 to 1076 (PPLI…PPLQ). A compositionally biased stretch (low complexity) spans 1093-1107 (LSGTSRPPTPTLSLK). The span at 1108 to 1123 (PTPPAPVRLSPAPPPG) shows a compositional bias: pro residues. The segment covering 1138-1160 (TFPPAAATTTSTTTATATTTAVP) has biased composition (low complexity). Ser-1172 carries the phosphoserine modification. Disordered stretches follow at residues 1320–1366 (GLTP…APMP), 1406–1425 (SLPG…PLAS), 1629–1760 (VPVM…ASPV), and 1839–1893 (SRLP…EEKR). Pro residues predominate over residues 1323–1336 (PVPPLAPAPRPPSS). Low complexity predominate over residues 1337–1360 (GLPAVLNPRPTLTPGRLPTPTLGT). Low complexity predominate over residues 1675-1691 (PASTQTLALAPALAPTL). Residues 1692–1733 (GGSSPSQTLSLGTGNPQGPFPTQTLSLTPASSLVPTPAQTLS) are compositionally biased toward polar residues. Pro residues predominate over residues 1750–1760 (PAPPLAPASPV). Residues 2044-2197 (KLQTLAVLLR…DMAIEGGNFT (154 aa)) enclose the Helicase C-terminal domain. Disordered regions lie at residues 2214–2233 (LEEP…EETV), 2271–2298 (FNEN…MSRA), 2327–2453 (VSRE…APAA), 2564–2583 (LELA…VPPK), 2598–3081 (KNLS…GRKS), and 3095–3230 (DLAD…KAKT). Low complexity predominate over residues 2215 to 2225 (EEPSSSSVPSA). Composition is skewed to basic and acidic residues over residues 2284 to 2298 (EAGR…MSRA), 2327 to 2358 (VSRE…RLPQ), and 2386 to 2403 (KAPE…RGAR). Positions 2438-2448 (RPAPRPRPTPA) are enriched in pro residues. Composition is skewed to low complexity over residues 2564–2579 (LELA…SLSL) and 2600–2611 (LSLTPSAPSLTL). The span at 2669 to 2679 (EADRTSEELTE) shows a compositional bias: basic and acidic residues. The span at 2694-2712 (VTAEVAAPSTSSSATSSPE) shows a compositional bias: low complexity. The segment covering 2782 to 2794 (SETSASPGSPSVR) has biased composition (polar residues). Residues 2807–2817 (GPCEAAPSSSL) are compositionally biased toward low complexity. A compositionally biased stretch (basic residues) spans 2856–2868 (VKRRRGRPPKKNR). Positions 2857–2869 (KRRRGRPPKKNRS) form a DNA-binding region, a.T hook 1. Pro residues predominate over residues 2913-2926 (IPGPQPLGPQPVHR). A DNA-binding region (a.T hook 2) is located at residues 2936-2948 (KRRRGRPPKARDL). The span at 2953 to 2965 (TISSAGDGNSESR) shows a compositional bias: polar residues. The span at 2967-2982 (QPPPHPSPLTPLPPLL) shows a compositional bias: pro residues. Over residues 2983–3002 (VCPTATVANTVTTVTISTSP) the composition is skewed to low complexity. The a.T hook 3 DNA-binding region spans 3004 to 3016 (KRKRGRPPKNPPS). The segment covering 3011–3020 (PKNPPSPRPS) has biased composition (pro residues). Residues 3044–3053 (PQGQGESEGS) are compositionally biased toward low complexity. Residues 3168–3184 (SVEESEAEASGEEEEGD) show a composition bias toward acidic residues.

It belongs to the SNF2/RAD54 helicase family. SWR1 subfamily. Interacts with CREBBP and EP300. May be part of a complex containing SRCAP, CREBBP, CARM1 and GRIP1. Component of the chromatin-remodeling SRCAP complex composed of at least SRCAP, DMAP1, RUVBL1, RUVBL2, ACTL6A, YEATS4, VPS72, ACTR6 and ZNHIT1. Component of a NuA4-related complex which contains EP400, TRRAP/PAF400, SRCAP, BRD8/SMAP, EPC1, DMAP1/DNMAP1, RUVBL1/TIP49, RUVBL2, actin, ACTL6A/BAF53A, VPS72 and YEATS4/GAS41. In terms of assembly, (Microbial infection) Interacts with hepatitis C virus (HCV) NS5A. As to quaternary structure, (Microbial infection) Interacts with human adenovirus 2 DBP.

It is found in the nucleus. Functionally, catalytic component of the SRCAP complex which mediates the ATP-dependent exchange of histone H2AZ/H2B dimers for nucleosomal H2A/H2B, leading to transcriptional regulation of selected genes by chromatin remodeling. Acts as a coactivator for CREB-mediated transcription, steroid receptor-mediated transcription, and Notch-mediated transcription. The protein is Helicase SRCAP (SRCAP) of Homo sapiens (Human).